An 896-amino-acid chain; its full sequence is Zinc finger protein 574 (896 aa).

C2H2-type zinc fingers lie at residues 16 to 38 (YVCS…QNSH), 76 to 98 (YQCL…QELH), and 126 to 148 (YECV…RQTH). At Ser164 the chain carries Phosphoserine. A C2H2-type 4 zinc finger spans residues 214–236 (YKCSECSQLFQLPADFLEHQATH). The segment at 239 to 301 (APVPESQEPA…RARRNNSGEA (63 aa)) is disordered. Residues 247-257 (PALQQEVQASS) show a composition bias toward polar residues. Residues 274-287 (HSYELRNGEAIGRD) show a composition bias toward basic and acidic residues. Position 298 is a phosphoserine (Ser298). 4 C2H2-type zinc fingers span residues 309-331 (LFCS…LRSH), 336-358 (FKCP…LGDH), 364-386 (FLCV…RRAH), and 392-413 (HSCP…RRTH). Residues 434–460 (FPEPAPAETGEPEAPEPPVSEETSAGP) are disordered. 6 C2H2-type zinc fingers span residues 466–489 (YRCL…RFVH), 495–517 (HKCS…LRTH), 523–545 (FPCP…RLTH), 551–573 (YRCG…RLVH), 579–601 (YRCQ…RYHH), and 607–630 (YKCR…LVVH). The C2H2-type 15; degenerate zinc finger occupies 636–659 (HRCPSCGAAFPSSLRLREHRCAAA). A C2H2-type 16 zinc finger spans residues 667–689 (FECGTCGKKVGSAARLQAHEAAH). The segment at 687–733 (AAHAAAGPGEVLAKEPPAPRAPRATRAPVASPAGLGGTATASPAAPA) is disordered. Residues 707 to 732 (APRATRAPVASPAGLGGTATASPAAP) show a composition bias toward low complexity. Ser717 is subject to Phosphoserine. The residue at position 724 (Thr724) is a Phosphothreonine. At Ser728 the chain carries Phosphoserine. C2H2-type zinc fingers lie at residues 738–760 (LECS…RRIH), 766–788 (YPCP…RRLH), 794–816 (FACE…RRIH), and 822–844 (YSCP…RKTH). Position 832 is an asymmetric dimethylarginine (Arg832).

It belongs to the krueppel C2H2-type zinc-finger protein family.

Its subcellular location is the nucleus. Functionally, may be involved in transcriptional regulation. The polypeptide is Zinc finger protein 574 (ZNF574) (Macaca fascicularis (Crab-eating macaque)).